An 88-amino-acid polypeptide reads, in one-letter code: Small ribosomal subunit protein uS17 (88 aa).

This sequence belongs to the universal ribosomal protein uS17 family. As to quaternary structure, part of the 30S ribosomal subunit.

Its function is as follows. One of the primary rRNA binding proteins, it binds specifically to the 5'-end of 16S ribosomal RNA. The chain is Small ribosomal subunit protein uS17 from Methylorubrum extorquens (strain PA1) (Methylobacterium extorquens).